A 145-amino-acid polypeptide reads, in one-letter code: uncharacterized protein (145 aa).

Residues Met1 to Leu21 traverse the membrane as a helical segment. The tract at residues Thr109–Lys145 is disordered. Basic and acidic residues predominate over residues Ala119–Asp138.

It is found in the membrane. This is an uncharacterized protein from Rhizobium meliloti (strain 1021) (Ensifer meliloti).